Consider the following 372-residue polypeptide: Tribbles homolog 1 (372 aa).

Disordered regions lie at residues Met-1–Ala-26 and Arg-49–Ser-85. Residues Tyr-59–Ser-74 are compositionally biased toward pro residues. One can recognise a Protein kinase domain in the interval Ile-91–Phe-338. Residues Asp-355–Glu-360 carry the COP1-binding motif.

This sequence belongs to the protein kinase superfamily. CAMK Ser/Thr protein kinase family. Tribbles subfamily. In terms of assembly, monomer. Interacts (via protein kinase domain) with CEBPA. Interacts with COP1.

Functionally, adapter protein involved in protein degradation by interacting with COP1 ubiquitin ligase. Promotes CEBPA degradation and inhibits its function. Controls macrophage, eosinophil and neutrophil differentiation via the COP1-binding domain. Regulates myeloid cell differentiation by altering the expression of CEBPA in a COP1-dependent manner. Interacts with MAPK kinases and regulates activation of MAP kinases, but has no kinase activity. The chain is Tribbles homolog 1 from Mus musculus (Mouse).